The chain runs to 71 residues: UPF0346 protein MGAS2096_Spy0401 (71 aa).

It belongs to the UPF0346 family.

The chain is UPF0346 protein MGAS2096_Spy0401 from Streptococcus pyogenes serotype M12 (strain MGAS2096).